Consider the following 246-residue polypeptide: Nuclear transcription factor Y subunit C-2 (246 aa).

2 disordered regions span residues 1–35 (MDNQQLPYAGQPAAAGAGAPVPGVPGAGGPPAVPH) and 205–246 (QQGA…PSSE). Residues 9–21 (AGQPAAAGAGAPV) are compositionally biased toward low complexity.

This sequence belongs to the NFYC/HAP5 subunit family. In terms of assembly, heterotrimeric transcription factor composed of three components, NF-YA, NF-YB and NF-YC. NF-YB and NF-YC must interact and dimerize for NF-YA association and DNA binding. Interacts with NFYB8, NFYB10 and HD5/NFYB11.

The protein resides in the nucleus. The protein localises to the cytoplasm. In terms of biological role, probable transcription factor involved in the regulation of flowering time under long day (LD) conditions. Functions as a repressor of flowering, independently of HD1 and GHD7. Controls flowering time by negatively regulating the expression of EHD1 and HD3A. Component of the NF-Y/HAP transcription factor complex. The chain is Nuclear transcription factor Y subunit C-2 from Oryza sativa subsp. japonica (Rice).